Here is a 312-residue protein sequence, read N- to C-terminus: Dehydrogenase/reductase SDR family member 7C (312 aa).

The signal sequence occupies residues 1–18; that stretch reads MGVMAMLMLPLLLLGISG. Residues S47, L49, Y192, K196, and S227 each contribute to the NAD(+) site. The active-site Proton acceptor is Y192.

It belongs to the short-chain dehydrogenases/reductases (SDR) family.

It localises to the sarcoplasmic reticulum membrane. The catalysed reaction is all-trans-retinol + NAD(+) = all-trans-retinal + NADH + H(+). NADH-dependent oxidoreductase which catalyzes the oxidation of all-trans-retinol to all-trans-retinal. Plays a role in the regulation of cardiac and skeletal muscle metabolic functions. Maintains Ca(2+) intracellular homeostasis by repressing Ca(2+) release from the sarcoplasmic reticulum (SR) in myotubes, possibly through local alternations in NAD/NADH or retinol/retinal. Also plays a role in Ca(2+) homeostasis by controlling Ca(2+) overload in the cytosol and the SR in myotubes. Involved in glucose uptake into skeletal muscles and muscle performance by activating PI3K and mTORC2-mediated AKT1 phosphorylation signaling pathways, possibly through the action of its downstream catalytic product all-trans-retinoic acid. The polypeptide is Dehydrogenase/reductase SDR family member 7C (Homo sapiens (Human)).